Consider the following 309-residue polypeptide: Ribonuclease Z (309 aa).

7 residues coordinate Zn(2+): histidine 61, histidine 63, aspartate 65, histidine 66, histidine 144, aspartate 212, and histidine 271. Aspartate 65 (proton acceptor) is an active-site residue.

It belongs to the RNase Z family. In terms of assembly, homodimer. The cofactor is Zn(2+).

It carries out the reaction Endonucleolytic cleavage of RNA, removing extra 3' nucleotides from tRNA precursor, generating 3' termini of tRNAs. A 3'-hydroxy group is left at the tRNA terminus and a 5'-phosphoryl group is left at the trailer molecule.. Zinc phosphodiesterase, which displays some tRNA 3'-processing endonuclease activity. Probably involved in tRNA maturation, by removing a 3'-trailer from precursor tRNA. This is Ribonuclease Z from Clostridium acetobutylicum (strain ATCC 824 / DSM 792 / JCM 1419 / IAM 19013 / LMG 5710 / NBRC 13948 / NRRL B-527 / VKM B-1787 / 2291 / W).